A 443-amino-acid polypeptide reads, in one-letter code: NADH-ubiquinone oxidoreductase chain 4 (443 aa).

Helical transmembrane passes span 1-21 (MFIS…PEAH), 27-47 (VWSF…WWNF), 71-91 (GVAL…MMLL), 93-113 (TVAG…ALCV), 114-134 (LDLL…FLLI), 148-168 (IVLY…MIYS), 187-207 (VLGW…PVHL), 217-237 (PTAG…IGFL), 247-267 (FCVS…LFST), 279-299 (IVAY…FSQS), 308-328 (FLMI…GILY), 335-355 (FILY…LFFL), 362-382 (AFPL…IFAV), 385-405 (LLAY…FWAF), and 423-443 (EFHT…KPMA).

The protein belongs to the complex I subunit 4 family.

It is found in the mitochondrion membrane. It catalyses the reaction a ubiquinone + NADH + 5 H(+)(in) = a ubiquinol + NAD(+) + 4 H(+)(out). Core subunit of the mitochondrial membrane respiratory chain NADH dehydrogenase (Complex I) that is believed to belong to the minimal assembly required for catalysis. Complex I functions in the transfer of electrons from NADH to the respiratory chain. The immediate electron acceptor for the enzyme is believed to be ubiquinone. The sequence is that of NADH-ubiquinone oxidoreductase chain 4 (ND4) from Chlamydomonas reinhardtii (Chlamydomonas smithii).